Here is a 161-residue protein sequence, read N- to C-terminus: Protein-export protein SecB (161 aa).

The protein belongs to the SecB family. Homotetramer, a dimer of dimers. One homotetramer interacts with 1 SecA dimer.

The protein localises to the cytoplasm. In terms of biological role, one of the proteins required for the normal export of preproteins out of the cell cytoplasm. It is a molecular chaperone that binds to a subset of precursor proteins, maintaining them in a translocation-competent state. It also specifically binds to its receptor SecA. The chain is Protein-export protein SecB from Shewanella putrefaciens (strain CN-32 / ATCC BAA-453).